Reading from the N-terminus, the 1321-residue chain is Probable serine/threonine-protein kinase fnkE (1321 aa).

4 FNIP repeats span residues 108–149 (YNQL…NLSS), 150–191 (YNQP…DLSS), 192–233 (YNKL…DLSS), and 255–296 (YNKL…DISS). In terms of domain architecture, Protein kinase 1 spans 295–595 (SSYNQLLTPG…YNYVIKDSIM (301 aa)). ATP-binding positions include 301–309 (LTPGTLSNN) and Lys325. The active-site Proton acceptor is Asp465. FNIP repeat units lie at residues 654 to 696 (FNHP…FNKF) and 741 to 783 (FNQP…LGSN). One can recognise a Protein kinase 2 domain in the interval 860–1128 (WEIISTLGSG…EGDSVFEKYL (269 aa)). ATP contacts are provided by residues 866 to 874 (LGSGNFGKV) and Lys895. Residue Asp990 is the Proton acceptor of the active site. 2 FNIP repeats span residues 1160–1202 (YNQM…LGNE) and 1224–1268 (FNFT…LGSN).

This sequence belongs to the protein kinase superfamily. STE Ser/Thr protein kinase family. It depends on Mg(2+) as a cofactor.

The enzyme catalyses L-seryl-[protein] + ATP = O-phospho-L-seryl-[protein] + ADP + H(+). It carries out the reaction L-threonyl-[protein] + ATP = O-phospho-L-threonyl-[protein] + ADP + H(+). The protein is Probable serine/threonine-protein kinase fnkE of Dictyostelium discoideum (Social amoeba).